The following is a 222-amino-acid chain: Small ribosomal subunit protein uS3 (222 aa).

Residues 38-106 (IRKFISEKLA…NVHINIVEIK (69 aa)) form the KH type-2 domain.

It belongs to the universal ribosomal protein uS3 family. Part of the 30S ribosomal subunit. Forms a tight complex with proteins S10 and S14.

Its function is as follows. Binds the lower part of the 30S subunit head. Binds mRNA in the 70S ribosome, positioning it for translation. This chain is Small ribosomal subunit protein uS3, found in Lactobacillus gasseri (strain ATCC 33323 / DSM 20243 / BCRC 14619 / CIP 102991 / JCM 1131 / KCTC 3163 / NCIMB 11718 / NCTC 13722 / AM63).